The following is a 436-amino-acid chain: GTPase Obg (436 aa).

In terms of domain architecture, Obg spans 2-160 (SMFLDTAKIQ…RELLLELKVL (159 aa)). Residues 161–338 (ADVGLVGFPS…LLDATAELLD (178 aa)) form the OBG-type G domain. GTP-binding positions include 167-174 (GFPSVGKS), 192-196 (FTTIV), 214-217 (DLPG), 284-287 (NKMD), and 319-321 (SSL). Mg(2+) contacts are provided by Ser-174 and Thr-194. Residues 358 to 436 (GFDEEAPAFE…IGKFEFEFVD (79 aa)) enclose the OCT domain.

This sequence belongs to the TRAFAC class OBG-HflX-like GTPase superfamily. OBG GTPase family. In terms of assembly, monomer. It depends on Mg(2+) as a cofactor.

The protein resides in the cytoplasm. In terms of biological role, an essential GTPase which binds GTP, GDP and possibly (p)ppGpp with moderate affinity, with high nucleotide exchange rates and a fairly low GTP hydrolysis rate. Plays a role in control of the cell cycle, stress response, ribosome biogenesis and in those bacteria that undergo differentiation, in morphogenesis control. The sequence is that of GTPase Obg from Streptococcus sanguinis (strain SK36).